The primary structure comprises 197 residues: Probable nicotinate-nucleotide adenylyltransferase (197 aa).

It belongs to the NadD family.

The catalysed reaction is nicotinate beta-D-ribonucleotide + ATP + H(+) = deamido-NAD(+) + diphosphate. It functions in the pathway cofactor biosynthesis; NAD(+) biosynthesis; deamido-NAD(+) from nicotinate D-ribonucleotide: step 1/1. Catalyzes the reversible adenylation of nicotinate mononucleotide (NaMN) to nicotinic acid adenine dinucleotide (NaAD). The sequence is that of Probable nicotinate-nucleotide adenylyltransferase from Porphyromonas gingivalis (strain ATCC 33277 / DSM 20709 / CIP 103683 / JCM 12257 / NCTC 11834 / 2561).